The primary structure comprises 547 residues: uncharacterized protein (547 aa).

Transmembrane regions (helical) follow at residues 33–53 (PTFF…IMVI), 107–127 (PLIV…GVIF), 145–165 (TGLI…LSFA), 203–223 (VYIL…FYLA), 231–251 (FIAI…FLLV), 263–283 (VAGI…LIYL), 298–318 (LNKI…ASFF), 351–371 (TLLT…FGLL), 397–417 (TVII…VAFG), 432–452 (LDLA…VATG), 470–490 (IVSL…FQAI), and 499–519 (VFIW…IAFG).

The protein resides in the cell membrane. This is an uncharacterized protein from Mycoplasma genitalium (strain ATCC 33530 / DSM 19775 / NCTC 10195 / G37) (Mycoplasmoides genitalium).